Reading from the N-terminus, the 180-residue chain is Large ribosomal subunit protein uL5 (180 aa).

Belongs to the universal ribosomal protein uL5 family. In terms of assembly, part of the 50S ribosomal subunit; part of the 5S rRNA/L5/L18/L25 subcomplex. Contacts the 5S rRNA and the P site tRNA. Forms a bridge to the 30S subunit in the 70S ribosome.

In terms of biological role, this is one of the proteins that bind and probably mediate the attachment of the 5S RNA into the large ribosomal subunit, where it forms part of the central protuberance. In the 70S ribosome it contacts protein S13 of the 30S subunit (bridge B1b), connecting the 2 subunits; this bridge is implicated in subunit movement. Contacts the P site tRNA; the 5S rRNA and some of its associated proteins might help stabilize positioning of ribosome-bound tRNAs. In Streptococcus pyogenes serotype M49 (strain NZ131), this protein is Large ribosomal subunit protein uL5.